We begin with the raw amino-acid sequence, 873 residues long: DNA mismatch repair protein MutS (873 aa).

Gly-625–Ser-632 is an ATP binding site.

Belongs to the DNA mismatch repair MutS family.

In terms of biological role, this protein is involved in the repair of mismatches in DNA. It is possible that it carries out the mismatch recognition step. This protein has a weak ATPase activity. In Xanthomonas campestris pv. campestris (strain 8004), this protein is DNA mismatch repair protein MutS.